The primary structure comprises 422 residues: Protein phosphatase methylesterase 1 (422 aa).

The interval 1 to 27 is disordered; the sequence is MSDMFRKSVLNKLPHLPPTRAPWADES. Residues serine 207, aspartate 234, and histidine 371 contribute to the active site.

This sequence belongs to the AB hydrolase superfamily.

It carries out the reaction [phosphatase 2A protein]-C-terminal L-leucine methyl ester + H2O = [phosphatase 2A protein]-C-terminal L-leucine + methanol + H(+). Functionally, demethylates proteins that have been reversibly carboxymethylated. Demethylates the phosphatase PP2A catalytic subunit. The protein is Protein phosphatase methylesterase 1 (PPE1) of Cryptococcus neoformans var. neoformans serotype D (strain JEC21 / ATCC MYA-565) (Filobasidiella neoformans).